Reading from the N-terminus, the 468-residue chain is Uronate isomerase (468 aa).

Belongs to the metallo-dependent hydrolases superfamily. Uronate isomerase family.

It carries out the reaction D-glucuronate = D-fructuronate. The enzyme catalyses aldehydo-D-galacturonate = keto-D-tagaturonate. Its pathway is carbohydrate metabolism; pentose and glucuronate interconversion. The chain is Uronate isomerase from Brachyspira hyodysenteriae (strain ATCC 49526 / WA1).